The primary structure comprises 440 residues: Beta-1,3-galactosyl-O-glycosyl-glycoprotein beta-1,6-N-acetylglucosaminyltransferase (440 aa).

Residues 1–9 (MKMAGWKKK) are Cytoplasmic-facing. Residues 10 to 30 (LCPGHHLWALGCYMLLAVVSL) form a helical; Signal-anchor for type II membrane protein membrane-spanning segment. Residues 31–440 (RLSLRFKCDV…RHKAIYGTEL (410 aa)) are Lumenal-facing. Residues Asn-72 and Asn-108 are each glycosylated (N-linked (GlcNAc...) asparagine; by host). Intrachain disulfides connect Cys-73-Cys-230, Cys-164-Cys-384, Cys-185-Cys-212, and Cys-393-Cys-425.

The protein belongs to the glycosyltransferase 14 family.

The protein resides in the host Golgi apparatus membrane. The enzyme catalyses a 3-O-[beta-D-galactosyl-(1-&gt;3)-N-acetyl-alpha-D-galactosaminyl]-L-seryl-[protein] + UDP-N-acetyl-alpha-D-glucosamine = 3-O-{beta-D-galactosyl-(1-&gt;3)-[N-acetyl-beta-D-glucosaminyl-(1-&gt;6)]-N-acetyl-alpha-D-galactosaminyl}-L-seryl-[protein] + UDP + H(+). It carries out the reaction a 3-O-[beta-D-galactosyl-(1-&gt;3)-N-acetyl-alpha-D-galactosaminyl]-L-threonyl-[protein] + UDP-N-acetyl-alpha-D-glucosamine = a 3-O-{beta-D-galactosyl-(1-&gt;3)-[N-acetyl-beta-D-glucosaminyl-(1-&gt;6)]-N-acetyl-alpha-D-galactosaminyl}-L-threonyl-[protein] + UDP + H(+). It catalyses the reaction a beta-D-Gal-(1-&gt;4)-beta-D-GlcNAc-(1-&gt;3)-beta-D-Gal-(1-&gt;4)-beta-D-GlcNAc derivative + UDP-N-acetyl-alpha-D-glucosamine = a beta-D-Gal-(1-&gt;4)-beta-D-GlcNAc-(1-&gt;3)-[beta-D-GlcNAc-(1-&gt;6)]-beta-D-Gal-(1-&gt;4)-N-acetyl-beta-D-glucosaminyl derivative + UDP + H(+). The catalysed reaction is 3-O-[N-acetyl-beta-D-glucosaminyl-(1-&gt;3)-N-acetyl-alpha-D-galactosaminyl]-L-seryl-[protein] + UDP-N-acetyl-alpha-D-glucosamine = 3-O-[N-acetyl-beta-D-glucosaminyl-(1-&gt;3)-[N-acetyl-beta-D-glucosaminyl-(1-&gt;6)]-N-acetyl-alpha-D-galactosaminyl]-L-seryl-[protein] + UDP + H(+). The enzyme catalyses a 3-O-[N-acetyl-beta-D-glucosaminyl-(1-&gt;3)-N-acetyl-alpha-D-galactosaminyl]-L-threonyl-[protein] + UDP-N-acetyl-alpha-D-glucosamine = 3-O-[N-acetyl-beta-D-glucosaminyl-(1-&gt;3)-[N-acetyl-beta-D-glucosaminyl-(1-&gt;6)]-N-acetyl-alpha-D-galactosaminyl]-L-threonyl-[protein] + UDP + H(+). Its pathway is protein modification; protein glycosylation. Non-essential glycosyltransferase that can synthesize all known mucin beta 6 N-acetylglucosaminides. Mediates core 2 and core 4 O-glycan branching, 2 important steps in mucin-type biosynthesis. Has also I-branching enzyme activity by converting linear into branched poly-N-acetyllactosaminoglycans. Contributes to the post-translational modifications of structural proteins. This Bovine herpesvirus 4 (strain LVR140) (BoHV-4) protein is Beta-1,3-galactosyl-O-glycosyl-glycoprotein beta-1,6-N-acetylglucosaminyltransferase (Bo17).